Consider the following 740-residue polypeptide: MLKLFSAFRKNKIWDFNGGIHPPEMKTQSNGTPLRQVPLAQRFVIPLKQHIGAEGELCVSVGDKVLRGQPLTRGRGKMLPVHAPTSGTVTAIAPHSTAHPSALAELSVIIDADGEDCWIPRDGWADYRTRSREELIERIHQFGVAGLGGAGFPTGVKLQGGGDKIETLIINAAECEPYITADDRLMQDCAAQVVEGIRILAHILQPREILIGIEDNKPQAISMLRAVLADSNDISLRVIPTKYPSGGAKQLTYILTGKQVPHGGRSSDIGVLMQNVGTAYAVKRAVIDGEPITERVVTLTGEAIARPGNVWARLGTPVRHLLNDAGFCPSADQMVIMGGPLMGFTLPWLDVPVVKITNCLLAPSANELGEPQEEQSCIRCSACADACPADLLPQQLYWFSKGQQHDKATTHNIADCIECGACAWVCPSNIPLVQYFRQEKAEIAAIRQEEKRAAEAKARFEARQARLEREKAARLERHKSAAVQPAAKDKDAIAAALARVKEKQAQATQPIVIKAGERPDNSAIIAAREARKAQARAKQAELQQTNDAATVADPRKTAVEAAIARAKARKLEQQQANAEPEQQVDPRKAAVEAAIARAKARKLEQQQANAEPEEQVDPRKAAVEAAIARAKARKLEQQQANAEPEQQVDPRKAAVEAAIARAKARKREQQPANAEPEEQVDPRKAAVEAAIARAKARKLEQQQANAVPEEQVDPRKAAVAAAIARAQAKKAAQQKVVNED.

2 4Fe-4S ferredoxin-type domains span residues 369–397 (GEPQEEQSCIRCSACADACPADLLPQQLY) and 407–436 (KATTHNIADCIECGACAWVCPSNIPLVQYF). [4Fe-4S] cluster-binding residues include C377, C380, C383, C387, C416, C419, C422, and C426. Disordered stretches follow at residues 571–590 (LEQQQANAEPEQQVDPRKAA) and 602–716 (KLEQ…DPRK). Low complexity-rich tracts occupy residues 573–583 (QQQANAEPEQQ) and 637–647 (QQQANAEPEQQ).

It belongs to the 4Fe4S bacterial-type ferredoxin family. RnfC subfamily. In terms of assembly, the complex is composed of six subunits: RsxA, RsxB, RsxC, RsxD, RsxE and RsxG. The cofactor is [4Fe-4S] cluster.

The protein localises to the cell inner membrane. Part of a membrane-bound complex that couples electron transfer with translocation of ions across the membrane. Required to maintain the reduced state of SoxR. Probably transfers electron from NAD(P)H to SoxR. The chain is Ion-translocating oxidoreductase complex subunit C from Escherichia coli (strain K12).